The chain runs to 254 residues: Imidazole glycerol phosphate synthase subunit HisF (254 aa).

Catalysis depends on residues Asp12 and Asp131.

It belongs to the HisA/HisF family. As to quaternary structure, heterodimer of HisH and HisF.

The protein resides in the cytoplasm. The enzyme catalyses 5-[(5-phospho-1-deoxy-D-ribulos-1-ylimino)methylamino]-1-(5-phospho-beta-D-ribosyl)imidazole-4-carboxamide + L-glutamine = D-erythro-1-(imidazol-4-yl)glycerol 3-phosphate + 5-amino-1-(5-phospho-beta-D-ribosyl)imidazole-4-carboxamide + L-glutamate + H(+). It participates in amino-acid biosynthesis; L-histidine biosynthesis; L-histidine from 5-phospho-alpha-D-ribose 1-diphosphate: step 5/9. In terms of biological role, IGPS catalyzes the conversion of PRFAR and glutamine to IGP, AICAR and glutamate. The HisF subunit catalyzes the cyclization activity that produces IGP and AICAR from PRFAR using the ammonia provided by the HisH subunit. The sequence is that of Imidazole glycerol phosphate synthase subunit HisF from Rhizorhabdus wittichii (strain DSM 6014 / CCUG 31198 / JCM 15750 / NBRC 105917 / EY 4224 / RW1) (Sphingomonas wittichii).